A 295-amino-acid chain; its full sequence is Tyrosine recombinase XerD (295 aa).

Residues 1 to 85 (MNTIIEEYLN…TIRSFHQFAL (85 aa)) enclose the Core-binding (CB) domain. Residues 106 to 289 (KLPDVLEIDE…SKSQIRKMYT (184 aa)) enclose the Tyr recombinase domain. Catalysis depends on residues Arg-146, Lys-170, His-241, Arg-244, and His-267. The active-site O-(3'-phospho-DNA)-tyrosine intermediate is Tyr-276.

The protein belongs to the 'phage' integrase family. XerD subfamily. In terms of assembly, forms a cyclic heterotetrameric complex composed of two molecules of XerC and two molecules of XerD.

Its subcellular location is the cytoplasm. Its function is as follows. Site-specific tyrosine recombinase, which acts by catalyzing the cutting and rejoining of the recombining DNA molecules. The XerC-XerD complex is essential to convert dimers of the bacterial chromosome into monomers to permit their segregation at cell division. It also contributes to the segregational stability of plasmids. In Staphylococcus epidermidis (strain ATCC 12228 / FDA PCI 1200), this protein is Tyrosine recombinase XerD.